Consider the following 390-residue polypeptide: Succinyl-diaminopimelate desuccinylase 1 (390 aa).

Residue histidine 76 participates in Zn(2+) binding. Aspartate 78 is an active-site residue. Aspartate 109 provides a ligand contact to Zn(2+). The active-site Proton acceptor is glutamate 143. Zn(2+) contacts are provided by glutamate 144, glutamate 172, and histidine 363.

Belongs to the peptidase M20A family. DapE subfamily. As to quaternary structure, homodimer. Zn(2+) is required as a cofactor. It depends on Co(2+) as a cofactor.

The catalysed reaction is N-succinyl-(2S,6S)-2,6-diaminopimelate + H2O = (2S,6S)-2,6-diaminopimelate + succinate. The protein operates within amino-acid biosynthesis; L-lysine biosynthesis via DAP pathway; LL-2,6-diaminopimelate from (S)-tetrahydrodipicolinate (succinylase route): step 3/3. Its function is as follows. Catalyzes the hydrolysis of N-succinyl-L,L-diaminopimelic acid (SDAP), forming succinate and LL-2,6-diaminopimelate (DAP), an intermediate involved in the bacterial biosynthesis of lysine and meso-diaminopimelic acid, an essential component of bacterial cell walls. The protein is Succinyl-diaminopimelate desuccinylase 1 of Alteromonas mediterranea (strain DSM 17117 / CIP 110805 / LMG 28347 / Deep ecotype).